The following is a 499-amino-acid chain: MDNMNHEELNDQLLVRREKLHNLREQGIDPFGKRFERTNSTTDLVSLYGEFSKEELEEKEITVSIAGRIMTKRGKGKAGFAHIQDLQGQVQIYVRKDTVGDEEYELFTTADLGDLVGIEGKVFKTNVGELSVKAIGFTLLTKSLRPLPDKYHGLKDVEQRYRQRYLDLITSMESRETFVTRSKIIREMRRYLDDNGYLEVETPMMHAIAGGASARPFTTHHNALDMELYMRIAIELHLKRLIVGGLEKVYEIGRVFRNEGVSTRHNPEFTMIELYEAYADYNDIMKLTENMVAHIAKKVLGTTTIQYGDYEINLEPEWTRLHMVDAIKQHSGADFWNPMSVEEARELAKEHNVEIKNTMEVGHIINEFFEQKVEDKLIQPTFIYGHPVEISPLAKKNDEDPRFTDRFELFIVAREHANAFTELNDPIDQKERFEAQLKEREQGNDEAHMMDDDYIEALEYGMPPTGGLGIGIDRLVMLLTNAPSIRDVLLFPAMRHKQD.

Mg(2+) is bound by residues E408 and E415.

The protein belongs to the class-II aminoacyl-tRNA synthetase family. In terms of assembly, homodimer. Mg(2+) is required as a cofactor.

It is found in the cytoplasm. It carries out the reaction tRNA(Lys) + L-lysine + ATP = L-lysyl-tRNA(Lys) + AMP + diphosphate. This is Lysine--tRNA ligase from Bacillus mycoides (strain KBAB4) (Bacillus weihenstephanensis).